Consider the following 398-residue polypeptide: Phosphoglycerate kinase (398 aa).

Substrate-binding positions include 21–23 (DFN), Arg36, 59–62 (HLGR), Arg119, and Arg157. ATP-binding positions include Lys208, Gly296, Glu327, and 354–357 (GGDS).

This sequence belongs to the phosphoglycerate kinase family. As to quaternary structure, monomer.

Its subcellular location is the cytoplasm. The enzyme catalyses (2R)-3-phosphoglycerate + ATP = (2R)-3-phospho-glyceroyl phosphate + ADP. It functions in the pathway carbohydrate degradation; glycolysis; pyruvate from D-glyceraldehyde 3-phosphate: step 2/5. This Streptococcus pneumoniae (strain 70585) protein is Phosphoglycerate kinase.